Consider the following 88-residue polypeptide: Small ribosomal subunit protein bS16 (88 aa).

This sequence belongs to the bacterial ribosomal protein bS16 family.

The sequence is that of Small ribosomal subunit protein bS16 from Mycoplasma pneumoniae (strain ATCC 29342 / M129 / Subtype 1) (Mycoplasmoides pneumoniae).